We begin with the raw amino-acid sequence, 261 residues long: Thiazole synthase (261 aa).

The active-site Schiff-base intermediate with DXP is K101. 1-deoxy-D-xylulose 5-phosphate is bound by residues G162, 188–189 (AG), and 210–211 (NT).

Belongs to the ThiG family. In terms of assembly, homotetramer. Forms heterodimers with either ThiH or ThiS.

It is found in the cytoplasm. It carries out the reaction [ThiS sulfur-carrier protein]-C-terminal-Gly-aminoethanethioate + 2-iminoacetate + 1-deoxy-D-xylulose 5-phosphate = [ThiS sulfur-carrier protein]-C-terminal Gly-Gly + 2-[(2R,5Z)-2-carboxy-4-methylthiazol-5(2H)-ylidene]ethyl phosphate + 2 H2O + H(+). It functions in the pathway cofactor biosynthesis; thiamine diphosphate biosynthesis. Functionally, catalyzes the rearrangement of 1-deoxy-D-xylulose 5-phosphate (DXP) to produce the thiazole phosphate moiety of thiamine. Sulfur is provided by the thiocarboxylate moiety of the carrier protein ThiS. In vitro, sulfur can be provided by H(2)S. The chain is Thiazole synthase from Azoarcus sp. (strain BH72).